A 400-amino-acid polypeptide reads, in one-letter code: GTPase Obg (400 aa).

Residues 1 to 159 (MRFVDEAVIT…REIRLELKVL (159 aa)) enclose the Obg domain. In terms of domain architecture, OBG-type G spans 160 to 333 (ADVGLLGMPN…VVYYLMDQIE (174 aa)). Residues 166–173 (GMPNAGKS), 191–195 (FTTMV), 213–216 (DIPG), 283–286 (NKLD), and 314–316 (SGL) each bind GTP. Positions 173 and 193 each coordinate Mg(2+).

Belongs to the TRAFAC class OBG-HflX-like GTPase superfamily. OBG GTPase family. As to quaternary structure, monomer. It depends on Mg(2+) as a cofactor.

Its subcellular location is the cytoplasm. Functionally, an essential GTPase which binds GTP, GDP and possibly (p)ppGpp with moderate affinity, with high nucleotide exchange rates and a fairly low GTP hydrolysis rate. Plays a role in control of the cell cycle, stress response, ribosome biogenesis and in those bacteria that undergo differentiation, in morphogenesis control. The protein is GTPase Obg of Acinetobacter baylyi (strain ATCC 33305 / BD413 / ADP1).